The following is a 266-amino-acid chain: Small ribosomal subunit protein eS1 (266 aa).

Residues 236-266 (GAGTAAKATGDDTGAKVERADGYEPPIQESV) are disordered. The segment covering 244 to 257 (TGDDTGAKVERADG) has biased composition (basic and acidic residues).

The protein belongs to the eukaryotic ribosomal protein eS1 family. In terms of assembly, component of the small ribosomal subunit. Mature ribosomes consist of a small (40S) and a large (60S) subunit. The 40S subunit contains about 33 different proteins and 1 molecule of RNA (18S). The 60S subunit contains about 49 different proteins and 3 molecules of RNA (28S, 5.8S and 5S). Part of the small subunit (SSU) processome, composed of more than 70 proteins and the RNA chaperone small nucleolar RNA (snoRNA) U3.

Its subcellular location is the cytoplasm. The protein localises to the nucleus. It localises to the nucleolus. Its function is as follows. Component of the small ribosomal subunit. The ribosome is a large ribonucleoprotein complex responsible for the synthesis of proteins in the cell. Part of the small subunit (SSU) processome, first precursor of the small eukaryotic ribosomal subunit. During the assembly of the SSU processome in the nucleolus, many ribosome biogenesis factors, an RNA chaperone and ribosomal proteins associate with the nascent pre-rRNA and work in concert to generate RNA folding, modifications, rearrangements and cleavage as well as targeted degradation of pre-ribosomal RNA by the RNA exosome. May play a role during erythropoiesis. The sequence is that of Small ribosomal subunit protein eS1 (rps3a) from Tetraodon nigroviridis (Spotted green pufferfish).